Reading from the N-terminus, the 212-residue chain is Putative 3-methyladenine DNA glycosylase (212 aa).

The protein belongs to the DNA glycosylase MPG family.

The sequence is that of Putative 3-methyladenine DNA glycosylase from Psychrobacter cryohalolentis (strain ATCC BAA-1226 / DSM 17306 / VKM B-2378 / K5).